Here is a 685-residue protein sequence, read N- to C-terminus: Polyphosphate kinase (685 aa).

Asn45 is a binding site for ATP. Mg(2+) contacts are provided by Arg375 and Arg405. His435 functions as the Phosphohistidine intermediate in the catalytic mechanism. 3 residues coordinate ATP: Tyr468, Arg564, and His592.

It belongs to the polyphosphate kinase 1 (PPK1) family. The cofactor is Mg(2+). An intermediate of this reaction is the autophosphorylated ppk in which a phosphate is covalently linked to a histidine residue through a N-P bond.

It catalyses the reaction [phosphate](n) + ATP = [phosphate](n+1) + ADP. Its function is as follows. Catalyzes the reversible transfer of the terminal phosphate of ATP to form a long-chain polyphosphate (polyP). This is Polyphosphate kinase from Neisseria gonorrhoeae (strain ATCC 700825 / FA 1090).